Consider the following 217-residue polypeptide: MKFFLDTANVEEIKKAMEWGILDGVTTNPTLISKTGRPFKEVVKEILELVDGPVSLETVSLDAEGMIREGRMLAELGENVVVKIPMTPEGLKAVIALESEGIPTNVTLVFSPTQALLAAKAGASYVSPFVGRLDDISGEGMKLIEEIKTIFSNYEFDTEIIVASVRHPMHVLESALIGADICTMPFKVMEQLFKHPLTDIGLERFLKDWEKVPEKPF.

K83 (schiff-base intermediate with substrate) is an active-site residue.

Belongs to the transaldolase family. Type 3B subfamily.

It localises to the cytoplasm. It carries out the reaction D-sedoheptulose 7-phosphate + D-glyceraldehyde 3-phosphate = D-erythrose 4-phosphate + beta-D-fructose 6-phosphate. Its pathway is carbohydrate degradation; pentose phosphate pathway; D-glyceraldehyde 3-phosphate and beta-D-fructose 6-phosphate from D-ribose 5-phosphate and D-xylulose 5-phosphate (non-oxidative stage): step 2/3. In terms of biological role, transaldolase is important for the balance of metabolites in the pentose-phosphate pathway. This chain is Probable transaldolase (tal), found in Aquifex aeolicus (strain VF5).